Reading from the N-terminus, the 1300-residue chain is Zinc finger protein 536 (1300 aa).

2 disordered regions span residues 1-26 (MEEA…GPVL) and 47-77 (FPEL…GQPM). Positions 48 to 69 (PELHPRPNPEEKPPASLEEKAH) are enriched in basic and acidic residues. 6 C2H2-type zinc fingers span residues 130–152 (YPCP…MRTH), 158–180 (FKCP…LRTH), 274–297 (FRCT…RILH), 300–323 (YKCT…EKAH), 345–367 (FRCE…MRKH), and 373–395 (HCCQ…MKVH). 2 disordered regions span residues 584-604 (HSTK…LESS) and 650-739 (SRVH…QQPA). Residues 594 to 604 (LPSKLDPLESS) are compositionally biased toward basic and acidic residues. Residues 631 to 653 (TECPDCGRVFRTYHQVVVHSRVH) form a C2H2-type 7 zinc finger. Over residues 657 to 674 (RKGEEDGLHVGLDERRGS) the composition is skewed to basic and acidic residues. A compositionally biased stretch (polar residues) spans 675 to 696 (GSDQESQSVSRSTTPGSSNVTE). 2 C2H2-type zinc fingers span residues 751-773 (KDCP…LRIH) and 779-801 (YKCP…LERH). A disordered region spans residues 802 to 826 (HRERQNGAGPLSGQPPNQDHKDEMS). Phosphoserine is present on residues Ser-826 and Ser-827. A compositionally biased stretch (polar residues) spans 856–880 (SQQWTSGVLSSGDHSGQATGMSSEV). 3 disordered regions span residues 856–893 (SQQW…LPSK), 937–985 (KDKA…PDAA), and 1124–1260 (SGAS…SLDK). 2 stretches are compositionally biased toward basic and acidic residues: residues 950–972 (HGVD…EKSQ) and 1133–1143 (KEPDGKAHSEE). 2 stretches are compositionally biased toward acidic residues: residues 1160-1170 (DLSDIASSEDM) and 1178-1187 (NDEEDVETEP). Positions 1194 to 1209 (LSALSKDSSSDGGDSL) are enriched in low complexity.

It belongs to the krueppel C2H2-type zinc-finger protein family.

The protein resides in the nucleus. Its function is as follows. Transcriptional repressor that negatively regulates neuron differentiation by repressing retinoic acid-induced gene transcription. Binds and interrupts RARA from binding to retinoic acid response elements (RARE) composed of tandem 5'-AGGTCA-3' sites known as DR1-DR5. Recognizes and binds 2 copies of the core DNA sequence 5'-CCCCCA-3'. The sequence is that of Zinc finger protein 536 (ZNF536) from Homo sapiens (Human).